A 649-amino-acid polypeptide reads, in one-letter code: DNA mismatch repair protein MutL (649 aa).

Belongs to the DNA mismatch repair MutL/HexB family.

This protein is involved in the repair of mismatches in DNA. It is required for dam-dependent methyl-directed DNA mismatch repair. May act as a 'molecular matchmaker', a protein that promotes the formation of a stable complex between two or more DNA-binding proteins in an ATP-dependent manner without itself being part of a final effector complex. This chain is DNA mismatch repair protein MutL, found in Streptococcus pneumoniae serotype 2 (strain D39 / NCTC 7466).